The sequence spans 456 residues: Myricetin 3-O-rhamnosyltransferase UGT77B2 (456 aa).

Catalysis depends on His-19, which acts as the Proton acceptor. Residue His-19 coordinates an anthocyanidin. The Charge relay role is filled by Asp-116. Residue His-147 coordinates an anthocyanidin. Residues Thr-279, Ala-334, His-351, Asn-355, and Glu-359 each coordinate UDP-beta-L-rhamnose. Residue Ala-374 coordinates an anthocyanidin.

Belongs to the UDP-glycosyltransferase family. Expressed in young cromes.

The catalysed reaction is myricetin + UDP-beta-L-rhamnose = myricetin 3-O-alpha-L-rhamnoside + UDP + H(+). It functions in the pathway flavonoid metabolism. Functionally, rhamnosyltransferase involved in montbretin A (MbA) biosynthesis. Catalyzes the 3-O rhamnosylation of myricetin to produce myricetin 3-O-alpha-L-rhamnoside (MR), a precursor of MbA. MbA is a potent inhibitor of human pancreatic alpha-amylase and is being developed as drug candidate to treat type-2 diabetes. In vitro, is able to transfer UDP-glucose and UDP-xylose with 50-fold less efficiency compared with UDP-rhamnose. In vitro, can use kaempferol or quercetin as substrates, although these two flavonols may not be physiological substrates in vivo. The sequence is that of Myricetin 3-O-rhamnosyltransferase UGT77B2 from Crocosmia x crocosmiiflora (Montbretia).